Here is an 854-residue protein sequence, read N- to C-terminus: Fibroblast growth factor receptor 1 (854 aa).

An N-terminal signal peptide occupies residues 1-20 (MSGLFFLLSELLILLGKINS). Topologically, residues 21 to 383 (VSKKSLCHPE…NFFMNSVPLS (363 aa)) are extracellular. One can recognise an Ig-like C2-type 1 domain in the interval 29–120 (PELFKIDNKL…SSVFFLINVT (92 aa)). The cysteines at positions 50 and 102 are disulfide-linked. 11 N-linked (GlcNAc...) asparagine glycosylation sites follow: asparagine 95, asparagine 99, asparagine 110, asparagine 118, asparagine 140, asparagine 175, asparagine 202, asparagine 248, asparagine 283, asparagine 317, and asparagine 346. Ig-like C2-type domains follow at residues 147-259 (PEMG…FTFT) and 268-369 (PHLT…LSVI). A disulfide bridge links cysteine 166 with cysteine 242. Residues cysteine 288 and cysteine 353 are joined by a disulfide bond. The helical transmembrane segment at 384-404 (IFLVIGFFVAIILLSLIIYCF) threads the bilayer. The Cytoplasmic portion of the chain corresponds to 405 to 854 (FLQYKNAVDS…SDYLEPKCLV (450 aa)). The Protein kinase domain maps to 551-822 (KITNKKLGEG…EIVEILIDII (272 aa)). ATP contacts are provided by residues 557–565 (LGEGAFGMV) and lysine 585. Residue aspartate 689 is the Proton acceptor of the active site. Tyrosine 718 bears the Phosphotyrosine; by autocatalysis mark.

Belongs to the protein kinase superfamily. Tyr protein kinase family. Fibroblast growth factor receptor subfamily. In terms of tissue distribution, expressed in brain, stem cells and the mesenchymal cells.

It localises to the membrane. The catalysed reaction is L-tyrosyl-[protein] + ATP = O-phospho-L-tyrosyl-[protein] + ADP + H(+). Its function is as follows. Receptor for basic fibroblast growth factor. The sequence is that of Fibroblast growth factor receptor 1 (FGFR1) from Dugesia japonica (Planarian).